The primary structure comprises 246 residues: 1-(5-phosphoribosyl)-5-[(5-phosphoribosylamino)methylideneamino] imidazole-4-carboxamide isomerase (246 aa).

The active-site Proton acceptor is aspartate 8. Aspartate 130 serves as the catalytic Proton donor.

It belongs to the HisA/HisF family.

It localises to the cytoplasm. It catalyses the reaction 1-(5-phospho-beta-D-ribosyl)-5-[(5-phospho-beta-D-ribosylamino)methylideneamino]imidazole-4-carboxamide = 5-[(5-phospho-1-deoxy-D-ribulos-1-ylimino)methylamino]-1-(5-phospho-beta-D-ribosyl)imidazole-4-carboxamide. It participates in amino-acid biosynthesis; L-histidine biosynthesis; L-histidine from 5-phospho-alpha-D-ribose 1-diphosphate: step 4/9. This Alcanivorax borkumensis (strain ATCC 700651 / DSM 11573 / NCIMB 13689 / SK2) protein is 1-(5-phosphoribosyl)-5-[(5-phosphoribosylamino)methylideneamino] imidazole-4-carboxamide isomerase.